The chain runs to 316 residues: tRNA selenocysteine 1-associated protein 1-like (316 aa).

RRM domains are found at residues 6 to 89 (TSLW…YATY) and 99 to 178 (FSVF…IAVN). The span at 239 to 248 (PPMGMPPMPP) shows a compositional bias: pro residues. The interval 239–285 (PPMGMPPMPPDMQGSTEAHDGTEEVEEDPSEDPNPQVDVEELNRQYM) is disordered.

This sequence belongs to the RRM TRSPAP family.

It localises to the nucleus. The protein localises to the cytoplasm. Its function is as follows. Involved in the early steps of selenocysteine biosynthesis and tRNA(Sec) charging to the later steps resulting in the cotranslational incorporation of selenocysteine into selenoproteins. The protein is tRNA selenocysteine 1-associated protein 1-like (trnau1apl) of Danio rerio (Zebrafish).